Consider the following 379-residue polypeptide: MQEALALFFGSESLLVGTIIPFLFVLTVVVFVHEMGHYLVARWCGIGAQAFSIGFGPELLGFTDRHGTRWKLSAIPLGGYVKFIGDESETSSPVGVNESALSEEDRKRAFHTQPVWKRAATVFAGPAFNIILTIAIFSVFFALYGRQIADPLIAGVQPGSPAAEAGFEPGDRFVSVEGEKITTFADVQRIVSGRAGDKLNFTVERDGKMVDLQAVPKIVERTDPLGNKVKLGAIGVETTEAVGNFRRIEYGPLESVGQAVIETGHIIGRTGEFFKRFAVGREDKCQLGGPVKIATMASKAASQGFDWLIQLMAMLSIGIGLLNLFPLPPLDGGHLVFYAVEAIKGSPVSGAAQEIFYRIGFLLVMGFMGFVLFNDLFAC.

Residue His33 coordinates Zn(2+). Residue Glu34 is part of the active site. His37 contacts Zn(2+). 4 helical membrane-spanning segments follow: residues 39-61, 122-144, 305-327, and 355-377; these read LVAR…ELLG, VFAG…FALY, FDWL…LFPL, and IFYR…NDLF. Positions 133–208 constitute a PDZ domain; it reads TIAIFSVFFA…LNFTVERDGK (76 aa).

Belongs to the peptidase M50B family. Requires Zn(2+) as cofactor.

The protein localises to the cell inner membrane. In Brucella suis biovar 1 (strain 1330), this protein is Putative zinc metalloprotease BR1156/BS1330_I1152.